The following is a 138-amino-acid chain: Small ribosomal subunit protein uS11 (138 aa).

The segment covering 1–12 (MAPKKPGAAGPK) has biased composition (low complexity). Disordered stretches follow at residues 1–27 (MAPK…NVPH) and 119–138 (ISDV…RRRV). The span at 13 to 22 (KAQKTRRREK) shows a compositional bias: basic residues.

It belongs to the universal ribosomal protein uS11 family. As to quaternary structure, part of the 30S ribosomal subunit. Interacts with proteins S7 and S18. Binds to IF-3.

In terms of biological role, located on the platform of the 30S subunit, it bridges several disparate RNA helices of the 16S rRNA. Forms part of the Shine-Dalgarno cleft in the 70S ribosome. In Mycobacteroides abscessus (strain ATCC 19977 / DSM 44196 / CCUG 20993 / CIP 104536 / JCM 13569 / NCTC 13031 / TMC 1543 / L948) (Mycobacterium abscessus), this protein is Small ribosomal subunit protein uS11.